Consider the following 502-residue polypeptide: Bone morphogenetic protein receptor type-1B (502 aa).

The N-terminal stretch at 1 to 13 (MLLRSSGKLNVGT) is a signal peptide. Positions 1 to 24 (MLLRSSGKLNVGTKKEDGESTAPT) are disordered. Residues 14 to 126 (KKEDGESTAP…DFVDGPIHHK (113 aa)) lie on the Extracellular side of the membrane. Intrachain disulfides connect Cys32-Cys53, Cys34-Cys38, Cys47-Cys71, Cys81-Cys95, and Cys96-Cys102. A helical membrane pass occupies residues 127–148 (ALLISVTVCSLLLVLIILFCYF). At 149-502 (RYKRQEARPR…KMSESQDIKL (354 aa)) the chain is on the cytoplasmic side. The 30-residue stretch at 174–203 (ESLRDLIEQSQSSGSGSGLPLLVQRTIAKQ) folds into the GS domain. The region spanning 204-494 (IQMVKQIGKG…LRVKKTLAKM (291 aa)) is the Protein kinase domain. Residues 210–218 (IGKGRYGEV) and Lys231 each bind ATP. Asp332 (proton acceptor) is an active-site residue.

This sequence belongs to the protein kinase superfamily. TKL Ser/Thr protein kinase family. TGFB receptor subfamily. As to quaternary structure, interacts with high affinity with GDF5; positively regulates chondrocyte differentiation. Interacts with SCUBE3. Interacts with TSC22D1/TSC-22. Interacts with TGFBR3. Mg(2+) serves as cofactor. Mn(2+) is required as a cofactor. Autophosphorylated.

It localises to the cell membrane. It carries out the reaction L-threonyl-[receptor-protein] + ATP = O-phospho-L-threonyl-[receptor-protein] + ADP + H(+). The enzyme catalyses L-seryl-[receptor-protein] + ATP = O-phospho-L-seryl-[receptor-protein] + ADP + H(+). On ligand binding, forms a receptor complex consisting of two type II and two type I transmembrane serine/threonine kinases. Type II receptors phosphorylate and activate type I receptors which autophosphorylate, then bind and activate SMAD transcriptional regulators. Receptor for BMP7/OP-1. Receptor for GDF5. Positively regulates chondrocyte differentiation through GDF5 interaction. In Mus musculus (Mouse), this protein is Bone morphogenetic protein receptor type-1B (Bmpr1b).